The sequence spans 250 residues: Triosephosphate isomerase (250 aa).

A substrate-binding site is contributed by 8-10 (NWK). Histidine 93 functions as the Electrophile in the catalytic mechanism. Catalysis depends on glutamate 165, which acts as the Proton acceptor. Residues glycine 171 and serine 211 each contribute to the substrate site.

This sequence belongs to the triosephosphate isomerase family. As to quaternary structure, homodimer.

It localises to the cytoplasm. The catalysed reaction is D-glyceraldehyde 3-phosphate = dihydroxyacetone phosphate. It participates in carbohydrate biosynthesis; gluconeogenesis. The protein operates within carbohydrate degradation; glycolysis; D-glyceraldehyde 3-phosphate from glycerone phosphate: step 1/1. Its function is as follows. Involved in the gluconeogenesis. Catalyzes stereospecifically the conversion of dihydroxyacetone phosphate (DHAP) to D-glyceraldehyde-3-phosphate (G3P). In Malacoplasma penetrans (strain HF-2) (Mycoplasma penetrans), this protein is Triosephosphate isomerase.